The primary structure comprises 76 residues: Tautomerase PptA (76 aa).

The active-site Proton acceptor; via imino nitrogen is Pro-2.

Belongs to the 4-oxalocrotonate tautomerase family. PptA subfamily. As to quaternary structure, homodimer.

It is found in the cytoplasm. The polypeptide is Tautomerase PptA (Cronobacter sakazakii (strain ATCC BAA-894) (Enterobacter sakazakii)).